Here is a 361-residue protein sequence, read N- to C-terminus: 3-dehydroquinate synthase (361 aa).

NAD(+) contacts are provided by residues 72 to 77 (SGEKEK), 130 to 131 (TT), lysine 142, and lysine 151. Zn(2+) is bound by residues glutamate 184, histidine 247, and histidine 264.

The protein belongs to the sugar phosphate cyclases superfamily. Dehydroquinate synthase family. The cofactor is Co(2+). It depends on Zn(2+) as a cofactor. NAD(+) is required as a cofactor.

The protein localises to the cytoplasm. It carries out the reaction 7-phospho-2-dehydro-3-deoxy-D-arabino-heptonate = 3-dehydroquinate + phosphate. The protein operates within metabolic intermediate biosynthesis; chorismate biosynthesis; chorismate from D-erythrose 4-phosphate and phosphoenolpyruvate: step 2/7. In terms of biological role, catalyzes the conversion of 3-deoxy-D-arabino-heptulosonate 7-phosphate (DAHP) to dehydroquinate (DHQ). In Bacillus cereus (strain AH820), this protein is 3-dehydroquinate synthase.